A 750-amino-acid polypeptide reads, in one-letter code: Polyribonucleotide nucleotidyltransferase (750 aa).

Mg(2+) is bound by residues Asp-489 and Asp-495. The KH domain maps to 556–620; that stretch reads PKMITRRIPN…EGIDKVIAKI (65 aa). One can recognise an S1 motif domain in the interval 630 to 701; sequence GSVYEVKVIK…KTRKDKVSRK (72 aa). The disordered stretch occupies residues 697–750; the sequence is KVSRKALMEKPEGYKERAPRDRDDKRGSRDNNRGRDNRGRDNRRDDRKPRENKD. Positions 702–750 are enriched in basic and acidic residues; that stretch reads ALMEKPEGYKERAPRDRDDKRGSRDNNRGRDNRGRDNRRDDRKPRENKD.

It belongs to the polyribonucleotide nucleotidyltransferase family. Requires Mg(2+) as cofactor.

It localises to the cytoplasm. The enzyme catalyses RNA(n+1) + phosphate = RNA(n) + a ribonucleoside 5'-diphosphate. Functionally, involved in mRNA degradation. Catalyzes the phosphorolysis of single-stranded polyribonucleotides processively in the 3'- to 5'-direction. In Christiangramia forsetii (strain DSM 17595 / CGMCC 1.15422 / KT0803) (Gramella forsetii), this protein is Polyribonucleotide nucleotidyltransferase.